We begin with the raw amino-acid sequence, 480 residues long: Adenosylhomocysteinase (480 aa).

Substrate is bound by residues T63, D142, and E203. 204-206 provides a ligand contact to NAD(+); sequence TTT. Residues K233 and D237 each contribute to the substrate site. NAD(+) is bound by residues N238, 267 to 272, E290, N325, 346 to 348, and N394; these read GYGDVG and IGH.

The protein belongs to the adenosylhomocysteinase family. Requires NAD(+) as cofactor.

Its subcellular location is the cytoplasm. It catalyses the reaction S-adenosyl-L-homocysteine + H2O = L-homocysteine + adenosine. It functions in the pathway amino-acid biosynthesis; L-homocysteine biosynthesis; L-homocysteine from S-adenosyl-L-homocysteine: step 1/1. May play a key role in the regulation of the intracellular concentration of adenosylhomocysteine. The sequence is that of Adenosylhomocysteinase from Xanthomonas axonopodis pv. citri (strain 306).